Reading from the N-terminus, the 87-residue chain is DNA-directed RNA polymerase subunit omega (87 aa).

It belongs to the RNA polymerase subunit omega family. As to quaternary structure, the RNAP catalytic core consists of 2 alpha, 1 beta, 1 beta' and 1 omega subunit. When a sigma factor is associated with the core the holoenzyme is formed, which can initiate transcription.

It catalyses the reaction RNA(n) + a ribonucleoside 5'-triphosphate = RNA(n+1) + diphosphate. Promotes RNA polymerase assembly. Latches the N- and C-terminal regions of the beta' subunit thereby facilitating its interaction with the beta and alpha subunits. This is DNA-directed RNA polymerase subunit omega from Ectopseudomonas mendocina (strain ymp) (Pseudomonas mendocina).